Consider the following 343-residue polypeptide: Insertion element IS630 uncharacterized 39 kDa protein (343 aa).

The polypeptide is Insertion element IS630 uncharacterized 39 kDa protein (Shigella sonnei).